A 70-amino-acid polypeptide reads, in one-letter code: DNA-directed RNA polymerase subunit omega (70 aa).

It belongs to the RNA polymerase subunit omega family. As to quaternary structure, the RNAP catalytic core consists of 2 alpha, 1 beta, 1 beta' and 1 omega subunit. When a sigma factor is associated with the core the holoenzyme is formed, which can initiate transcription.

It carries out the reaction RNA(n) + a ribonucleoside 5'-triphosphate = RNA(n+1) + diphosphate. Promotes RNA polymerase assembly. Latches the N- and C-terminal regions of the beta' subunit thereby facilitating its interaction with the beta and alpha subunits. In Thermoanaerobacter sp. (strain X514), this protein is DNA-directed RNA polymerase subunit omega.